Here is a 451-residue protein sequence, read N- to C-terminus: Endosomal transmembrane epsin interactor 1 (451 aa).

An N-terminal signal peptide occupies residues 1 to 29; that stretch reads MILLVNLFVLLSVVCILLNLAGFILGCQG. At 30 to 85 the chain is on the lumenal side; sequence AQFVSSVPRCDLVDLGEGKICFCCEEFQPAKCTDKENALKLFPVQPCSAVHLLLKK. A helical transmembrane segment spans residues 86–106; sequence VLFALCALNALTTTVCLVAAA. The Cytoplasmic portion of the chain corresponds to 107 to 451; the sequence is LRYLQIFASR…LIGVIRETVL (345 aa). Residues 107-451 are mediates interaction with EPN1; sequence LRYLQIFASR…LIGVIRETVL (345 aa). 2 short sequence motifs (PPxY; mediates interaction with ITCH) span residues 148 to 151 and 194 to 197; these read PPSY and PPPY. Positions 204 to 213 are enriched in polar residues; sequence TDQEQESSFQ. The tract at residues 204 to 224 is disordered; the sequence is TDQEQESSFQMPEGPETAASP. Lys-274 is covalently cross-linked (Glycyl lysine isopeptide (Lys-Gly) (interchain with G-Cter in ubiquitin)). Ser-275 is subject to Phosphoserine. Residue Lys-365 forms a Glycyl lysine isopeptide (Lys-Gly) (interchain with G-Cter in ubiquitin) linkage.

The protein belongs to the ENTREP family. As to quaternary structure, interacts with ITCH; enhances the ubiquitination of CXCR4 by ITCH and the subsequent endocytosis and desensitization of the receptor. Interacts with EPN1.

It localises to the early endosome membrane. The protein localises to the late endosome membrane. It is found in the recycling endosome membrane. Its subcellular location is the cell membrane. In terms of biological role, functions as an activator of the E3 ubiquitin protein ligase ITCH in the ubiquitination of the CXCL12-activated CXCR4 receptor. Thereby, triggers CXCR4 endocytosis and desensitization, negatively regulating the CXCL12/CXCR4 signaling pathway. This is Endosomal transmembrane epsin interactor 1 from Mus musculus (Mouse).